Reading from the N-terminus, the 375-residue chain is Holliday junction branch migration complex subunit RuvB (375 aa).

The segment covering 1 to 22 has biased composition (polar residues); the sequence is MAIVSSKQSPQPDGSKKPSQAK. Positions 1-44 are disordered; it reads MAIVSSKQSPQPDGSKKPSQAKSVKKSVEHSKPQQTDALLQPEA. The large ATPase domain (RuvB-L) stretch occupies residues 13–218; sequence DGSKKPSQAK…FGFVQRLRFY (206 aa). Residues Leu-57, Arg-58, Gly-99, Lys-102, Thr-103, Thr-104, 165-167, Arg-208, Tyr-218, and Arg-255 contribute to the ATP site; that span reads EDF. A Mg(2+)-binding site is contributed by Thr-103. The tract at residues 219 to 289 is small ATPAse domain (RuvB-S); it reads EADELGQIVL…IAQEALELFN (71 aa). Positions 292 to 375 are head domain (RuvB-H); that stretch reads PCGLDWTDRR…PPDEQMRLLS (84 aa). Arg-347 and Arg-352 together coordinate DNA.

It belongs to the RuvB family. Homohexamer. Forms an RuvA(8)-RuvB(12)-Holliday junction (HJ) complex. HJ DNA is sandwiched between 2 RuvA tetramers; dsDNA enters through RuvA and exits via RuvB. An RuvB hexamer assembles on each DNA strand where it exits the tetramer. Each RuvB hexamer is contacted by two RuvA subunits (via domain III) on 2 adjacent RuvB subunits; this complex drives branch migration. In the full resolvosome a probable DNA-RuvA(4)-RuvB(12)-RuvC(2) complex forms which resolves the HJ.

The protein resides in the cytoplasm. It catalyses the reaction ATP + H2O = ADP + phosphate + H(+). The RuvA-RuvB-RuvC complex processes Holliday junction (HJ) DNA during genetic recombination and DNA repair, while the RuvA-RuvB complex plays an important role in the rescue of blocked DNA replication forks via replication fork reversal (RFR). RuvA specifically binds to HJ cruciform DNA, conferring on it an open structure. The RuvB hexamer acts as an ATP-dependent pump, pulling dsDNA into and through the RuvAB complex. RuvB forms 2 homohexamers on either side of HJ DNA bound by 1 or 2 RuvA tetramers; 4 subunits per hexamer contact DNA at a time. Coordinated motions by a converter formed by DNA-disengaged RuvB subunits stimulates ATP hydrolysis and nucleotide exchange. Immobilization of the converter enables RuvB to convert the ATP-contained energy into a lever motion, pulling 2 nucleotides of DNA out of the RuvA tetramer per ATP hydrolyzed, thus driving DNA branch migration. The RuvB motors rotate together with the DNA substrate, which together with the progressing nucleotide cycle form the mechanistic basis for DNA recombination by continuous HJ branch migration. Branch migration allows RuvC to scan DNA until it finds its consensus sequence, where it cleaves and resolves cruciform DNA. This Acaryochloris marina (strain MBIC 11017) protein is Holliday junction branch migration complex subunit RuvB.